Reading from the N-terminus, the 590-residue chain is Aspartate--tRNA(Asp/Asn) ligase (590 aa).

L-aspartate is bound at residue Glu169. Positions 193–196 (QLFK) are aspartate. L-aspartate is bound at residue Arg215. Residues 215–217 (RDE) and Gln224 each bind ATP. His447 is an L-aspartate binding site. Glu479 provides a ligand contact to ATP. Residue Arg486 coordinates L-aspartate. ATP is bound at residue 531–534 (GWDR). The segment at 556–590 (GGFDPLTAAPAPITPEQRKEAGVDARPQQDLPPQS) is disordered.

The protein belongs to the class-II aminoacyl-tRNA synthetase family. Type 1 subfamily. As to quaternary structure, homodimer.

Its subcellular location is the cytoplasm. It carries out the reaction tRNA(Asx) + L-aspartate + ATP = L-aspartyl-tRNA(Asx) + AMP + diphosphate. Aspartyl-tRNA synthetase with relaxed tRNA specificity since it is able to aspartylate not only its cognate tRNA(Asp) but also tRNA(Asn). Reaction proceeds in two steps: L-aspartate is first activated by ATP to form Asp-AMP and then transferred to the acceptor end of tRNA(Asp/Asn). The sequence is that of Aspartate--tRNA(Asp/Asn) ligase from Nocardioides sp. (strain ATCC BAA-499 / JS614).